A 409-amino-acid chain; its full sequence is Torsin-4A (409 aa).

Over residues 1 to 16 (MGEQDPSDRLRGDQLK) the composition is skewed to basic and acidic residues. Disordered regions lie at residues 1–28 (MGEQ…SFSQ) and 75–99 (DNLH…KGRV). Over residues 17 to 28 (EPNQNGKGSFSQ) the composition is skewed to polar residues. Basic residues predominate over residues 88 to 98 (PRKRKKKRKGR). Residues 120–136 (CLYLLCIIVFLQVYNAI) form a helical membrane-spanning segment. 192-199 (GPTGVGKS) is an ATP binding site.

This sequence belongs to the ClpA/ClpB family. Torsin subfamily.

It is found in the membrane. The sequence is that of Torsin-4A (tor4a) from Danio rerio (Zebrafish).